Reading from the N-terminus, the 428-residue chain is tRNA(Ile2) 2-agmatinylcytidine synthetase TiaS (428 aa).

The protein belongs to the TiaS family.

The protein resides in the cytoplasm. The enzyme catalyses cytidine(34) in tRNA(Ile2) + agmatine + ATP + H2O = 2-agmatinylcytidine(34) in tRNA(Ile2) + AMP + 2 phosphate + 2 H(+). In terms of biological role, ATP-dependent agmatine transferase that catalyzes the formation of 2-agmatinylcytidine (agm2C) at the wobble position (C34) of tRNA(Ile2), converting the codon specificity from AUG to AUA. The polypeptide is tRNA(Ile2) 2-agmatinylcytidine synthetase TiaS (Methanosarcina acetivorans (strain ATCC 35395 / DSM 2834 / JCM 12185 / C2A)).